A 431-amino-acid chain; its full sequence is 5-methylthioadenosine/S-adenosylhomocysteine deaminase (431 aa).

2 residues coordinate Zn(2+): His66 and His68. Substrate-binding residues include Glu95, Arg147, and His185. His212 contributes to the Zn(2+) binding site. Substrate is bound by residues Glu215 and Asp300. Asp300 is a binding site for Zn(2+).

This sequence belongs to the metallo-dependent hydrolases superfamily. MTA/SAH deaminase family. Requires Zn(2+) as cofactor.

It carries out the reaction S-adenosyl-L-homocysteine + H2O + H(+) = S-inosyl-L-homocysteine + NH4(+). The catalysed reaction is S-methyl-5'-thioadenosine + H2O + H(+) = S-methyl-5'-thioinosine + NH4(+). Its function is as follows. Catalyzes the deamination of 5-methylthioadenosine and S-adenosyl-L-homocysteine into 5-methylthioinosine and S-inosyl-L-homocysteine, respectively. Is also able to deaminate adenosine. The polypeptide is 5-methylthioadenosine/S-adenosylhomocysteine deaminase (Desulfitobacterium hafniense (strain DSM 10664 / DCB-2)).